Consider the following 130-residue polypeptide: Small ribosomal subunit protein uS9 (130 aa).

The tract at residues 98-130 (LKRAGLLTRDPRMKERKKPGLKKARRSPQFSKR) is disordered. Positions 111 to 130 (KERKKPGLKKARRSPQFSKR) are enriched in basic residues.

The protein belongs to the universal ribosomal protein uS9 family.

The protein is Small ribosomal subunit protein uS9 of Staphylococcus epidermidis (strain ATCC 35984 / DSM 28319 / BCRC 17069 / CCUG 31568 / BM 3577 / RP62A).